The following is a 54-amino-acid chain: Large ribosomal subunit protein bL33 (54 aa).

Belongs to the bacterial ribosomal protein bL33 family.

The polypeptide is Large ribosomal subunit protein bL33 (Symbiobacterium thermophilum (strain DSM 24528 / JCM 14929 / IAM 14863 / T)).